Consider the following 338-residue polypeptide: Phosphatidate cytidylyltransferase, mitochondrial (338 aa).

Belongs to the TAM41 family. Mg(2+) is required as a cofactor.

It is found in the mitochondrion inner membrane. It catalyses the reaction a 1,2-diacyl-sn-glycero-3-phosphate + CTP + H(+) = a CDP-1,2-diacyl-sn-glycerol + diphosphate. It participates in phospholipid metabolism; CDP-diacylglycerol biosynthesis; CDP-diacylglycerol from sn-glycerol 3-phosphate: step 3/3. Catalyzes the conversion of phosphatidic acid (PA) to CDP-diacylglycerol (CDP-DAG), an essential intermediate in the synthesis of phosphatidylglycerol, cardiolipin and phosphatidylinositol. The polypeptide is Phosphatidate cytidylyltransferase, mitochondrial (tamm41) (Xenopus laevis (African clawed frog)).